We begin with the raw amino-acid sequence, 846 residues long: Major vault protein beta (846 aa).

Position 2 is an N-acetylalanine (A2). MVP repeat units follow at residues 2–60 (ATPV…IPPR), 61–115 (QYCI…QPVP), 116–172 (LQVI…EPVR), 173–225 (AVII…GFIQ), 226–280 (ALVL…RDIK), 281–332 (AITL…IQNV), 333–388 (NVLS…RRKR), 389–458 (IPLD…STKV), and 459–521 (ITYR…FLGP).

In terms of assembly, the vault ribonucleoprotein particle is a huge (400 A x 670 A) cage structure of 12.9 MDa. It consists of a dimer of half-vaults, with each half-vault comprising 39 identical major vault protein (MVP) chains. Dictyostelium is one of the few organisms in which the major component is actually two proteins (alpha and beta).

The protein resides in the cytoplasm. It is found in the nucleus. Its function is as follows. Unknown, though MVP-beta is required for normal vault structure. This is Major vault protein beta (mvpB) from Dictyostelium discoideum (Social amoeba).